The following is a 696-amino-acid chain: Elongation factor G (696 aa).

Positions 8-290 constitute a tr-type G domain; it reads ERYRNIGIMA…AVLDYLPSPL (283 aa). Residues 17-24, 88-92, and 142-145 each bind GTP; these read AHIDAGKT, DTPGH, and NKMD.

Belongs to the TRAFAC class translation factor GTPase superfamily. Classic translation factor GTPase family. EF-G/EF-2 subfamily.

It localises to the cytoplasm. In terms of biological role, catalyzes the GTP-dependent ribosomal translocation step during translation elongation. During this step, the ribosome changes from the pre-translocational (PRE) to the post-translocational (POST) state as the newly formed A-site-bound peptidyl-tRNA and P-site-bound deacylated tRNA move to the P and E sites, respectively. Catalyzes the coordinated movement of the two tRNA molecules, the mRNA and conformational changes in the ribosome. The polypeptide is Elongation factor G (Nitrosomonas eutropha (strain DSM 101675 / C91 / Nm57)).